Here is a 167-residue protein sequence, read N- to C-terminus: Sperm acrosome membrane-associated protein 3 (167 aa).

The Cytoplasmic segment spans residues 1-63 (MVSALREAPL…EARSRALRRR (63 aa)). Residues 64–84 (WCPAGIILLALISLLSCLLPA) traverse the membrane as a helical; Signal-anchor for type II membrane protein segment. Residues 85–167 (SEAKVYGRCE…VPNVCQMYCS (83 aa)) lie on the Extracellular side of the membrane. Residues 88-167 (KVYGRCELAR…VPNVCQMYCS (80 aa)) form the C-type lysozyme domain. Residues Cys151 and Cys166 are joined by a disulfide bond.

It belongs to the glycosyl hydrolase 22 family. In terms of assembly, interacts with ASTL. The processed form derives from the membrane form by proteolytic processing.

The protein localises to the cytoplasmic vesicle. Its subcellular location is the secretory vesicle. It localises to the acrosome membrane. Its function is as follows. Sperm surface membrane protein that may be involved in sperm-egg plasma membrane adhesion and fusion during fertilization. It could be a potential receptor for the egg oligosaccharide residue N-acetylglucosamine, which is present in the extracellular matrix over the egg plasma membrane. The processed form has no detectable bacteriolytic activity in vitro. This Pongo pygmaeus (Bornean orangutan) protein is Sperm acrosome membrane-associated protein 3 (SPACA3).